A 194-amino-acid chain; its full sequence is CASP-like protein 1B1 (194 aa).

The Cytoplasmic portion of the chain corresponds to 1–24; it reads MASENGDKLELAFSAVPDPKPKKD. A helical membrane pass occupies residues 25-45; sequence WVILSLRVVAFFATASATLVM. At 46–77 the chain is on the extracellular side; that stretch reads AFNKQTKGMVVATIGTNPVTITLTAMFQHTPA. Residues 78-98 form a helical membrane-spanning segment; it reads FIFFVIVNAIASFYNLLVIGV. Residues 99 to 111 are Cytoplasmic-facing; sequence EILGPQYDYKGLR. A helical transmembrane segment spans residues 112-132; sequence LGLIAILDVMTMALAATGDGA. Topologically, residues 133–164 are extracellular; sequence ATFMAELGRNGNSHARWDKICDKFEAYCNRGG. Residues 165-185 form a helical membrane-spanning segment; sequence VALVASFVGLILLLVVTVMSI. Residues 186–194 lie on the Cytoplasmic side of the membrane; it reads TKLLKLNRI.

Belongs to the Casparian strip membrane proteins (CASP) family. Homodimer and heterodimers.

Its subcellular location is the cell membrane. In Glycine max (Soybean), this protein is CASP-like protein 1B1.